The following is a 95-amino-acid chain: Large ribosomal subunit protein bL21 (95 aa).

Belongs to the bacterial ribosomal protein bL21 family. In terms of assembly, part of the 50S ribosomal subunit. Contacts protein L20.

Functionally, this protein binds to 23S rRNA in the presence of protein L20. This Chlorobaculum tepidum (strain ATCC 49652 / DSM 12025 / NBRC 103806 / TLS) (Chlorobium tepidum) protein is Large ribosomal subunit protein bL21.